The chain runs to 156 residues: ATP synthase subunit b (156 aa).

The helical transmembrane segment at 7-29 threads the bilayer; the sequence is LIAQAISFAILIWFTTKFVWPYL.

This sequence belongs to the ATPase B chain family. F-type ATPases have 2 components, F(1) - the catalytic core - and F(0) - the membrane proton channel. F(1) has five subunits: alpha(3), beta(3), gamma(1), delta(1), epsilon(1). F(0) has three main subunits: a(1), b(2) and c(10-14). The alpha and beta chains form an alternating ring which encloses part of the gamma chain. F(1) is attached to F(0) by a central stalk formed by the gamma and epsilon chains, while a peripheral stalk is formed by the delta and b chains.

It is found in the cell inner membrane. Functionally, f(1)F(0) ATP synthase produces ATP from ADP in the presence of a proton or sodium gradient. F-type ATPases consist of two structural domains, F(1) containing the extramembraneous catalytic core and F(0) containing the membrane proton channel, linked together by a central stalk and a peripheral stalk. During catalysis, ATP synthesis in the catalytic domain of F(1) is coupled via a rotary mechanism of the central stalk subunits to proton translocation. Component of the F(0) channel, it forms part of the peripheral stalk, linking F(1) to F(0). The sequence is that of ATP synthase subunit b from Methylobacillus flagellatus (strain ATCC 51484 / DSM 6875 / VKM B-1610 / KT).